The chain runs to 89 residues: uncharacterized protein (89 aa).

This is an uncharacterized protein from Archaeoglobus fulgidus (strain ATCC 49558 / DSM 4304 / JCM 9628 / NBRC 100126 / VC-16).